We begin with the raw amino-acid sequence, 1185 residues long: Chromosome partition protein Smc (1185 aa).

Proline 34–asparagine 41 is a binding site for ATP. 2 coiled-coil regions span residues tryptophan 174–isoleucine 376 and glutamate 412–valine 526. The SMC hinge domain maps to valine 534–isoleucine 644. The stretch at asparagine 679–glycine 1039 forms a coiled coil.

This sequence belongs to the SMC family. Homodimer.

The protein resides in the cytoplasm. In terms of biological role, required for chromosome condensation and partitioning. The polypeptide is Chromosome partition protein Smc (Clostridium kluyveri (strain NBRC 12016)).